The sequence spans 134 residues: MIVRSLDDINGTDADVVTENWRSRRIVLARDGVGFSFHETVLYAGTETSMWYANHIELVHCIEGEAEVTNDETGETFLITPGTLYLLNGHERHTVRPKTDFRVLCVFTPPVTGREVHDENGSYPLLTEDATDTD.

This sequence belongs to the ectoine synthase family.

The enzyme catalyses (2S)-4-acetamido-2-aminobutanoate = L-ectoine + H2O. Its pathway is amine and polyamine biosynthesis; ectoine biosynthesis; L-ectoine from L-aspartate 4-semialdehyde: step 3/3. Its function is as follows. Catalyzes the circularization of gamma-N-acetyl-alpha,gamma-diaminobutyric acid (ADABA) to ectoine (1,4,5,6-tetrahydro-2-methyl-4-pyrimidine carboxylic acid), which is an excellent osmoprotectant. This Thermobifida fusca (strain YX) protein is L-ectoine synthase.